Consider the following 143-residue polypeptide: Large ribosomal subunit protein uL11 (143 aa).

Belongs to the universal ribosomal protein uL11 family. As to quaternary structure, part of the ribosomal stalk of the 50S ribosomal subunit. Interacts with L10 and the large rRNA to form the base of the stalk. L10 forms an elongated spine to which L12 dimers bind in a sequential fashion forming a multimeric L10(L12)X complex. Post-translationally, one or more lysine residues are methylated.

Functionally, forms part of the ribosomal stalk which helps the ribosome interact with GTP-bound translation factors. In Burkholderia ambifaria (strain MC40-6), this protein is Large ribosomal subunit protein uL11.